The chain runs to 265 residues: DNA repair protein RecO (265 aa).

Belongs to the RecO family.

Functionally, involved in DNA repair and RecF pathway recombination. The chain is DNA repair protein RecO from Mycolicibacterium paratuberculosis (strain ATCC BAA-968 / K-10) (Mycobacterium paratuberculosis).